Reading from the N-terminus, the 103-residue chain is uncharacterized protein (103 aa).

The CHCH domain maps to 10 to 63 (FPECDHLKQIYDKCFTEFFQKFITPNYRHQYAVNPCERLHDVYKRCVEERLATQ). 2 short sequence motifs (cx9C motif) span residues 13–23 (CDHLKQIYDKC) and 45–55 (CERLHDVYKRC). Disulfide bonds link cysteine 13–cysteine 55 and cysteine 23–cysteine 45. The span at 80-90 (TDDDKLKDRQN) shows a compositional bias: basic and acidic residues. Positions 80–103 (TDDDKLKDRQNNQKTNSENKCSSS) are disordered. The span at 91 to 103 (NQKTNSENKCSSS) shows a compositional bias: polar residues.

Belongs to the TRIAP1/MDM35 family.

This is an uncharacterized protein from Caenorhabditis elegans.